The following is a 259-amino-acid chain: Global transcriptional regulator CodY (259 aa).

Positions 1–155 (MNLLQKTRKI…GATVVGMEIL (155 aa)) are GAF domain. Positions 203-222 (ASKIADRVGITRSVIVNALR) form a DNA-binding region, H-T-H motif. Serine 215 is modified (phosphoserine).

It belongs to the CodY family.

The protein localises to the cytoplasm. In terms of biological role, DNA-binding global transcriptional regulator which is involved in the adaptive response to starvation and acts by directly or indirectly controlling the expression of numerous genes in response to nutrient availability. During rapid exponential growth, CodY is highly active and represses genes whose products allow adaptation to nutrient depletion. The chain is Global transcriptional regulator CodY from Geobacillus sp. (strain WCH70).